Consider the following 160-residue polypeptide: Cytochrome b6-f complex subunit 4 (160 aa).

The next 3 helical transmembrane spans lie at 36–56 (LLYI…GLAV), 95–115 (LLGV…PFLE), and 131–151 (TIFL…ALPI).

It belongs to the cytochrome b family. PetD subfamily. As to quaternary structure, the 4 large subunits of the cytochrome b6-f complex are cytochrome b6, subunit IV (17 kDa polypeptide, petD), cytochrome f and the Rieske protein, while the 4 small subunits are petG, petL, petM and petN. The complex functions as a dimer.

It is found in the plastid. The protein localises to the chloroplast thylakoid membrane. In terms of biological role, component of the cytochrome b6-f complex, which mediates electron transfer between photosystem II (PSII) and photosystem I (PSI), cyclic electron flow around PSI, and state transitions. The polypeptide is Cytochrome b6-f complex subunit 4 (Anthoceros angustus (Hornwort)).